We begin with the raw amino-acid sequence, 471 residues long: Mannose-1-phosphate guanylyltransferase (471 aa).

It belongs to the mannose-6-phosphate isomerase type 2 family.

It catalyses the reaction alpha-D-mannose 1-phosphate + GTP + H(+) = GDP-alpha-D-mannose + diphosphate. It participates in nucleotide-sugar biosynthesis; GDP-alpha-D-mannose biosynthesis; GDP-alpha-D-mannose from alpha-D-mannose 1-phosphate (GTP route): step 1/1. The protein operates within bacterial outer membrane biogenesis; LPS O-antigen biosynthesis. In terms of biological role, involved in GDP-mannose biosynthesis which serves as the activated sugar nucleotide precursor for mannose residues in cell surface polysaccharides. This enzyme participates in synthesis of the LPS O9 antigen. This is Mannose-1-phosphate guanylyltransferase (manC) from Escherichia coli.